Here is an 894-residue protein sequence, read N- to C-terminus: Leucine--tRNA ligase, mitochondrial (894 aa).

Residues 1–9 constitute a mitochondrion transit peptide; the sequence is MLPRPSSRF. Positions 56–66 match the 'HIGH' region motif; that stretch reads PYPSGVLHIGH. Residues 646 to 650 carry the 'KMSKS' region motif; it reads KMSKS. Lysine 649 is an ATP binding site.

Belongs to the class-I aminoacyl-tRNA synthetase family.

It is found in the mitochondrion matrix. It carries out the reaction tRNA(Leu) + L-leucine + ATP = L-leucyl-tRNA(Leu) + AMP + diphosphate. This Saccharomyces paradoxus (Yeast) protein is Leucine--tRNA ligase, mitochondrial (NAM2).